The following is a 100-amino-acid chain: Large ribosomal subunit protein uL23 (100 aa).

Belongs to the universal ribosomal protein uL23 family. In terms of assembly, part of the 50S ribosomal subunit. Contacts protein L29, and trigger factor when it is bound to the ribosome.

Its function is as follows. One of the early assembly proteins it binds 23S rRNA. One of the proteins that surrounds the polypeptide exit tunnel on the outside of the ribosome. Forms the main docking site for trigger factor binding to the ribosome. This is Large ribosomal subunit protein uL23 from Salmonella paratyphi A (strain ATCC 9150 / SARB42).